The chain runs to 100 residues: Toxin Rv0299 (100 aa).

Its function is as follows. Toxic component of a type II toxin-antitoxin (TA) system. Upon expression in M.smegmatis inhibits colony formation. Its toxic effect is neutralized by coexpression with cognate antitoxin Rv0298/MT0312. This chain is Toxin Rv0299, found in Mycobacterium tuberculosis (strain ATCC 25618 / H37Rv).